A 171-amino-acid polypeptide reads, in one-letter code: Peptide deformylase (171 aa).

Fe cation contacts are provided by Cys91 and His133. Glu134 is an active-site residue. His137 is a binding site for Fe cation.

The protein belongs to the polypeptide deformylase family. Requires Fe(2+) as cofactor.

The enzyme catalyses N-terminal N-formyl-L-methionyl-[peptide] + H2O = N-terminal L-methionyl-[peptide] + formate. Removes the formyl group from the N-terminal Met of newly synthesized proteins. Requires at least a dipeptide for an efficient rate of reaction. N-terminal L-methionine is a prerequisite for activity but the enzyme has broad specificity at other positions. This chain is Peptide deformylase, found in Cronobacter sakazakii (strain ATCC BAA-894) (Enterobacter sakazakii).